A 1588-amino-acid polypeptide reads, in one-letter code: Centrosomal protein of 170 kDa (1588 aa).

Positions I23–I73 constitute an FHA domain. Disordered stretches follow at residues L121–G172, K299–T323, Q338–S447, and S461–S508. Phosphoserine is present on S141. The span at E155–M164 shows a compositional bias: basic and acidic residues. A compositionally biased stretch (basic and acidic residues) spans E347–K357. A phosphoserine mark is found at S355 and S358. Y363 bears the Phosphotyrosine mark. Over residues K407–E418 the composition is skewed to basic and acidic residues. Phosphoserine occurs at positions 443, 463, and 494. At T498 the chain carries Phosphothreonine. A phosphoserine mark is found at S568, S577, S628, and S631. Residues E602–V854 are disordered. The span at L620–S631 shows a compositional bias: polar residues. T639 bears the Phosphothreonine mark. Residues N645–R654 show a composition bias toward basic and acidic residues. Phosphoserine is present on S662. Basic and acidic residues predominate over residues E663–L691. S718 bears the Phosphoserine mark. The segment covering S720–S731 has biased composition (basic and acidic residues). The residue at position 752 (T752) is a Phosphothreonine. Basic and acidic residues-rich tracts occupy residues H764–K774 and S789–S821. The span at K822 to I839 shows a compositional bias: polar residues. Phosphoserine occurs at positions 829, 870, and 872. The interval I844–E1588 is targeting to microtubules. Over residues L899 to E908 the composition is skewed to basic and acidic residues. 2 disordered regions span residues L899–R1222 and A1228–L1247. T906 and T912 each carry phosphothreonine. Residues P913 to T937 are compositionally biased toward polar residues. Phosphoserine occurs at positions 922, 925, and 950. A compositionally biased stretch (basic and acidic residues) spans D967 to K980. S1008 bears the Phosphoserine mark. At T1012 the chain carries Phosphothreonine. A compositionally biased stretch (polar residues) spans I1028–C1038. Residue T1047 is modified to Phosphothreonine. Position 1048 is a phosphoserine (S1048). Positions A1049–K1062 are enriched in basic and acidic residues. Over residues S1075 to L1093 the composition is skewed to low complexity. Phosphoserine occurs at positions 1102, 1104, 1122, 1123, 1135, 1150, and 1155. Residues D1103 to E1588 are targeting to centrosomes. Positions A1112 to P1128 are enriched in low complexity. A compositionally biased stretch (low complexity) spans E1158–A1173. Phosphoserine is present on residues S1188, S1195, S1200, S1229, S1231, S1241, S1260, and S1270. The span at T1191 to S1218 shows a compositional bias: polar residues. Residues S1315 to P1334 are disordered. S1362 carries the post-translational modification Phosphoserine. Positions P1370 to L1398 are disordered. A coiled-coil region spans residues K1467–D1495. Residues A1511–E1540 form a disordered region. The span at K1518–P1534 shows a compositional bias: polar residues. S1521 and S1522 each carry phosphoserine.

The protein belongs to the CEP170 family. As to quaternary structure, interacts with CCDC68 and CCDC120; leading to recruitment to centrosomes. Interacts with PLK1. Interacts with NIN. Interacts with FHDC1. Interacts with CCDC61. Interacts with TBK1; efficient complex formation may be dependent on the presence of CCDC61. Post-translationally, phosphorylated; probably by PLK1.

Its subcellular location is the cytoplasm. It localises to the cytoskeleton. It is found in the microtubule organizing center. The protein resides in the centrosome. The protein localises to the centriole. Its subcellular location is the spindle. Functionally, plays a role in microtubule organization. Required for centriole subdistal appendage assembly. This is Centrosomal protein of 170 kDa (Cep170) from Mus musculus (Mouse).